Here is a 207-residue protein sequence, read N- to C-terminus: MAKLDVFDIKNKKVGEIELSDSVFNDEVKEYLIHEAVKIQLANRRAGTVGVKNRSAVAGSGKKPFKQKGTGQARQGCRRAPQYPGGGVAFGPQAKTYNLSMNKKARRAAMRSALSLLFKNNKLTVLNNIDLDNVSTKNFVGILNGFTLDKTLVVTDVENRNLELSARNVKNVKVLKSEGLNIFDIMKYQSVIFTENSVRKVEGALQS.

The tract at residues 58 to 85 (AGSGKKPFKQKGTGQARQGCRRAPQYPG) is disordered.

It belongs to the universal ribosomal protein uL4 family. As to quaternary structure, part of the 50S ribosomal subunit.

Its function is as follows. One of the primary rRNA binding proteins, this protein initially binds near the 5'-end of the 23S rRNA. It is important during the early stages of 50S assembly. It makes multiple contacts with different domains of the 23S rRNA in the assembled 50S subunit and ribosome. Forms part of the polypeptide exit tunnel. The protein is Large ribosomal subunit protein uL4 of Geotalea uraniireducens (strain Rf4) (Geobacter uraniireducens).